Consider the following 317-residue polypeptide: 4-hydroxy-3-methylbut-2-enyl diphosphate reductase (317 aa).

Residue cysteine 12 coordinates [4Fe-4S] cluster. Positions 41 and 74 each coordinate (2E)-4-hydroxy-3-methylbut-2-enyl diphosphate. The dimethylallyl diphosphate site is built by histidine 41 and histidine 74. Histidine 41 and histidine 74 together coordinate isopentenyl diphosphate. Cysteine 97 contributes to the [4Fe-4S] cluster binding site. A (2E)-4-hydroxy-3-methylbut-2-enyl diphosphate-binding site is contributed by histidine 125. Residue histidine 125 participates in dimethylallyl diphosphate binding. Histidine 125 contributes to the isopentenyl diphosphate binding site. Glutamate 127 (proton donor) is an active-site residue. Threonine 168 is a (2E)-4-hydroxy-3-methylbut-2-enyl diphosphate binding site. Residue cysteine 198 coordinates [4Fe-4S] cluster. Residues serine 226, serine 227, asparagine 228, and serine 270 each coordinate (2E)-4-hydroxy-3-methylbut-2-enyl diphosphate. The dimethylallyl diphosphate site is built by serine 226, serine 227, asparagine 228, and serine 270. Isopentenyl diphosphate is bound by residues serine 226, serine 227, asparagine 228, and serine 270.

Belongs to the IspH family. As to quaternary structure, homodimer. The cofactor is [4Fe-4S] cluster.

The enzyme catalyses isopentenyl diphosphate + 2 oxidized [2Fe-2S]-[ferredoxin] + H2O = (2E)-4-hydroxy-3-methylbut-2-enyl diphosphate + 2 reduced [2Fe-2S]-[ferredoxin] + 2 H(+). The catalysed reaction is dimethylallyl diphosphate + 2 oxidized [2Fe-2S]-[ferredoxin] + H2O = (2E)-4-hydroxy-3-methylbut-2-enyl diphosphate + 2 reduced [2Fe-2S]-[ferredoxin] + 2 H(+). It functions in the pathway isoprenoid biosynthesis; dimethylallyl diphosphate biosynthesis; dimethylallyl diphosphate from (2E)-4-hydroxy-3-methylbutenyl diphosphate: step 1/1. The protein operates within isoprenoid biosynthesis; isopentenyl diphosphate biosynthesis via DXP pathway; isopentenyl diphosphate from 1-deoxy-D-xylulose 5-phosphate: step 6/6. Catalyzes the conversion of 1-hydroxy-2-methyl-2-(E)-butenyl 4-diphosphate (HMBPP) into a mixture of isopentenyl diphosphate (IPP) and dimethylallyl diphosphate (DMAPP). Acts in the terminal step of the DOXP/MEP pathway for isoprenoid precursor biosynthesis. This Yersinia enterocolitica serotype O:8 / biotype 1B (strain NCTC 13174 / 8081) protein is 4-hydroxy-3-methylbut-2-enyl diphosphate reductase.